A 780-amino-acid polypeptide reads, in one-letter code: Aconitate hydratase, mitochondrial (780 aa).

The N-terminal 27 residues, 1–27, are a transit peptide targeting the mitochondrion; sequence MAPYSLLVSRLQKALGARQYHVASVLC. Residue K31 is modified to N6-succinyllysine. N6-acetyllysine; alternate is present on K50. K50 carries the post-translational modification N6-succinyllysine; alternate. Q99 is a substrate binding site. K138 and K144 each carry N6-acetyllysine; alternate. N6-succinyllysine; alternate occurs at positions 138 and 144. 192 to 194 contributes to the substrate binding site; that stretch reads DSH. N6-acetyllysine; alternate is present on K233. An N6-succinyllysine; alternate modification is found at K233. C385 serves as a coordination point for [4Fe-4S] cluster. K411 carries the post-translational modification N6-succinyllysine. [4Fe-4S] cluster-binding residues include C448 and C451. Positions 474 and 479 each coordinate substrate. 2 positions are modified to N6-acetyllysine; alternate: K517 and K523. Residues K517 and K523 each carry the N6-succinyllysine; alternate modification. Residues 524–537 show a composition bias toward basic and acidic residues; it reads LEAPDADELPRAEF. A disordered region spans residues 524 to 560; the sequence is LEAPDADELPRAEFDPGQDTYQHPPKDSSGQQVDVSP. At K549 the chain carries N6-succinyllysine. A compositionally biased stretch (polar residues) spans 551–560; that stretch reads SSGQQVDVSP. The residue at position 559 (S559) is a Phosphoserine. K573 bears the N6-acetyllysine; alternate mark. K573 carries the post-translational modification N6-succinyllysine; alternate. K591 bears the N6-succinyllysine mark. N6-acetyllysine; alternate is present on K605. K605 carries the N6-succinyllysine; alternate modification. R607 contacts substrate. K628 is subject to N6-succinyllysine. Position 670 is a phosphoserine (S670). 670 to 671 provides a ligand contact to substrate; it reads SR. Position 689 is an N6-succinyllysine (K689). 2 positions are modified to N6-acetyllysine; alternate: K723 and K730. 2 positions are modified to N6-succinyllysine; alternate: K723 and K730. An N6-acetyllysine mark is found at K736 and K743.

It belongs to the aconitase/IPM isomerase family. As to quaternary structure, monomer. It depends on [4Fe-4S] cluster as a cofactor. Forms covalent cross-links mediated by transglutaminase TGM2, between a glutamine and the epsilon-amino group of a lysine residue, forming homopolymers and heteropolymers.

The protein localises to the mitochondrion. The enzyme catalyses citrate = D-threo-isocitrate. The protein operates within carbohydrate metabolism; tricarboxylic acid cycle; isocitrate from oxaloacetate: step 2/2. In terms of biological role, catalyzes the isomerization of citrate to isocitrate via cis-aconitate. The polypeptide is Aconitate hydratase, mitochondrial (ACO2) (Bos taurus (Bovine)).